The primary structure comprises 403 residues: 8-amino-7-oxononanoate synthase (403 aa).

Arg30 is a substrate binding site. Position 121–122 (121–122 (GY)) interacts with pyridoxal 5'-phosphate. Position 146 (His146) interacts with substrate. Pyridoxal 5'-phosphate-binding residues include Ser192, His220, and Thr248. Lys251 carries the post-translational modification N6-(pyridoxal phosphate)lysine. Thr367 contacts substrate.

It belongs to the class-II pyridoxal-phosphate-dependent aminotransferase family. BioF subfamily. As to quaternary structure, homodimer. Pyridoxal 5'-phosphate is required as a cofactor.

The enzyme catalyses 6-carboxyhexanoyl-[ACP] + L-alanine + H(+) = (8S)-8-amino-7-oxononanoate + holo-[ACP] + CO2. It functions in the pathway cofactor biosynthesis; biotin biosynthesis. Functionally, catalyzes the decarboxylative condensation of pimeloyl-[acyl-carrier protein] and L-alanine to produce 8-amino-7-oxononanoate (AON), [acyl-carrier protein], and carbon dioxide. This is 8-amino-7-oxononanoate synthase from Burkholderia vietnamiensis (strain G4 / LMG 22486) (Burkholderia cepacia (strain R1808)).